The primary structure comprises 238 residues: Testis-specific gene A8 protein (238 aa).

The interval 35-238 (GKGAKTNKRG…GEAVATTTMT (204 aa)) is disordered. Residues 39–48 (KTNKRGKRGG) show a composition bias toward basic residues. Tandem repeats lie at residues 79-93 (AAAA…PESS), 94-108 (AAAA…PESS), 109-123 (AAAA…PESS), 124-138 (AAAA…LESS), 153-158 (PAAPEA), 171-176 (PAAPEA), 180-185 (PAAPEA), and 189-194 (PAAPEA). Residues 79-148 (AAAAAPEAAA…AAAAAPEAAA (70 aa)) are 4 X 15 AA tandem repeats of A-A-A-A-A-P-E-A-A-A-S-[PL]-E-S-S. 2 stretches are compositionally biased toward low complexity: residues 79 to 200 (AAAA…AAPA) and 208 to 220 (WEAA…AAVK). The interval 153–194 (PAAPEAAAAPEVAAAPATPAAPEATAAPAAPEAATTPAAPEA) is 4 X 6 AA repeats of P-A-A-P-E-A.

Specifically expressed in testis (at protein level).

It localises to the cytoplasm. It is found in the nucleus. The protein localises to the nucleoplasm. The polypeptide is Testis-specific gene A8 protein (Mus musculus (Mouse)).